The following is a 450-amino-acid chain: Adenylosuccinate lyase (450 aa).

N(6)-(1,2-dicarboxyethyl)-AMP contacts are provided by residues 9-10 (RY), 75-77 (HHD), and 101-102 (TS). His-149 acts as the Proton donor/acceptor in catalysis. Residue Gln-223 participates in N(6)-(1,2-dicarboxyethyl)-AMP binding. Residue Ser-273 is the Proton donor/acceptor of the active site. N(6)-(1,2-dicarboxyethyl)-AMP is bound by residues Ser-274, 279 to 281 (KRN), and 318 to 322 (SVERV).

This sequence belongs to the lyase 1 family. Adenylosuccinate lyase subfamily. Homotetramer. Residues from neighboring subunits contribute catalytic and substrate-binding residues to each active site.

It carries out the reaction N(6)-(1,2-dicarboxyethyl)-AMP = fumarate + AMP. It catalyses the reaction (2S)-2-[5-amino-1-(5-phospho-beta-D-ribosyl)imidazole-4-carboxamido]succinate = 5-amino-1-(5-phospho-beta-D-ribosyl)imidazole-4-carboxamide + fumarate. It functions in the pathway purine metabolism; AMP biosynthesis via de novo pathway; AMP from IMP: step 2/2. The protein operates within purine metabolism; IMP biosynthesis via de novo pathway; 5-amino-1-(5-phospho-D-ribosyl)imidazole-4-carboxamide from 5-amino-1-(5-phospho-D-ribosyl)imidazole-4-carboxylate: step 2/2. Functionally, catalyzes two reactions in de novo purine nucleotide biosynthesis. Catalyzes the breakdown of 5-aminoimidazole- (N-succinylocarboxamide) ribotide (SAICAR or 2-[5-amino-1-(5-phospho-beta-D-ribosyl)imidazole-4-carboxamido]succinate) to 5-aminoimidazole-4-carboxamide ribotide (AICAR or 5-amino-1-(5-phospho-beta-D-ribosyl)imidazole-4-carboxamide) and fumarate, and of adenylosuccinate (ADS or N(6)-(1,2-dicarboxyethyl)-AMP) to adenosine monophosphate (AMP) and fumarate. This chain is Adenylosuccinate lyase (purB), found in Pyrococcus horikoshii (strain ATCC 700860 / DSM 12428 / JCM 9974 / NBRC 100139 / OT-3).